Reading from the N-terminus, the 873-residue chain is Protein SEY1 (873 aa).

At 1–750 (MVANGHFFAG…KRSAIGGITQ (750 aa)) the chain is on the cytoplasmic side. The 259-residue stretch at 50–308 (GFNYHLISVF…IPADGFAVYA (259 aa)) folds into the GB1/RHD3-type G domain. 60–67 (GSQSTGKS) serves as a coordination point for GTP. The disordered stretch occupies residues 677–701 (LDKWIGHTPSSATPADEEDLTPIGG). Over residues 691 to 701 (ADEEDLTPIGG) the composition is skewed to acidic residues. A helical transmembrane segment spans residues 751–771 (VPLYFYGLLLALGWNEIVAVL). Residues 772–774 (RNP) are Lumenal-facing. A helical transmembrane segment spans residues 775 to 795 (AYFLLLFVCAVTAYVTYQLNL). Topologically, residues 796–873 (WGPIIKMTEA…IDDADDDDDF (78 aa)) are cytoplasmic. Residues 841 to 873 (EGYDMSNMKNRKSAGGYQNNRSHIDDADDDDDF) form a disordered region.

This sequence belongs to the TRAFAC class dynamin-like GTPase superfamily. GB1/RHD3 GTPase family. RHD3 subfamily.

It is found in the endoplasmic reticulum membrane. Cooperates with the reticulon proteins and tubule-shaping DP1 family proteins to generate and maintain the structure of the tubular endoplasmic reticulum network. Has GTPase activity, which is required for its function in ER organization. The polypeptide is Protein SEY1 (Paracoccidioides lutzii (strain ATCC MYA-826 / Pb01) (Paracoccidioides brasiliensis)).